The following is a 327-amino-acid chain: Methionyl-tRNA formyltransferase (327 aa).

121–124 (SLLP) is a (6S)-5,6,7,8-tetrahydrofolate binding site.

It belongs to the Fmt family.

The catalysed reaction is L-methionyl-tRNA(fMet) + (6R)-10-formyltetrahydrofolate = N-formyl-L-methionyl-tRNA(fMet) + (6S)-5,6,7,8-tetrahydrofolate + H(+). In terms of biological role, attaches a formyl group to the free amino group of methionyl-tRNA(fMet). The formyl group appears to play a dual role in the initiator identity of N-formylmethionyl-tRNA by promoting its recognition by IF2 and preventing the misappropriation of this tRNA by the elongation apparatus. The protein is Methionyl-tRNA formyltransferase of Burkholderia pseudomallei (strain 1106a).